The chain runs to 226 residues: tRNA (guanine-N(7)-)-methyltransferase (226 aa).

S-adenosyl-L-methionine contacts are provided by Glu59, Glu84, Asp111, and Asp134. Asp134 is an active-site residue. Lys138 provides a ligand contact to substrate. The interaction with RNA stretch occupies residues 140–145; that stretch reads RHNKRR. Residues Asp170 and 205-208 each bind substrate; that span reads TKFE.

It belongs to the class I-like SAM-binding methyltransferase superfamily. TrmB family.

The catalysed reaction is guanosine(46) in tRNA + S-adenosyl-L-methionine = N(7)-methylguanosine(46) in tRNA + S-adenosyl-L-homocysteine. It participates in tRNA modification; N(7)-methylguanine-tRNA biosynthesis. Catalyzes the formation of N(7)-methylguanine at position 46 (m7G46) in tRNA. The polypeptide is tRNA (guanine-N(7)-)-methyltransferase (Chromobacterium violaceum (strain ATCC 12472 / DSM 30191 / JCM 1249 / CCUG 213 / NBRC 12614 / NCIMB 9131 / NCTC 9757 / MK)).